The chain runs to 577 residues: MLFSKLFAPTLKEPPKDAVLKSHKHLAQAGYIYQVGSGIYNFLPLAKKVLDKIENITHKRMQEHGAQNILMSFVVLASLWEKSGRLDKYGKELLVFKDRKDNDFVLSPTLEENITEIAANFIKSYKQLPVHLYQIHTKFRDEIRPRFGLVRAREFIMKDGYSFHEDAESLDKEFLNTQSAYKEILSDLGLDFRIVEADSGAIGGSKSREFVVLTECGEDTIVVCQNCDYAANIEIAKRSKRPEPLNVPKAQLAKFPTPNTTSAQSVAEFFKTEPYFVLKALVRKVIHKDKETLACFFVRGDDNLEEVKALNALNIIGANALELREASQKDLDNVGLIAGFIGPYGLKKHVSYIIFDEDLKEGDCLIAGANEKDFHAVGVDLKGFENLVYADIVQVKESDRCPNCQGALKYHKSLEVGHIFKLGQGYAKSLKASFLDKNGKEQFFEMGCYGIGISRLLSAILEQKSDDLGCVWTKNTAPFDVVIVVSNWKDEAQKKLAFEVYERLLQKGVDALLDDRDARFGAKMRDFELIGERLALIIGKQTLESKEFECIKRANLEKQTIKDIELEEKILEMLESE.

It belongs to the class-II aminoacyl-tRNA synthetase family. ProS type 1 subfamily. Homodimer.

Its subcellular location is the cytoplasm. It catalyses the reaction tRNA(Pro) + L-proline + ATP = L-prolyl-tRNA(Pro) + AMP + diphosphate. In terms of biological role, catalyzes the attachment of proline to tRNA(Pro) in a two-step reaction: proline is first activated by ATP to form Pro-AMP and then transferred to the acceptor end of tRNA(Pro). As ProRS can inadvertently accommodate and process non-cognate amino acids such as alanine and cysteine, to avoid such errors it has two additional distinct editing activities against alanine. One activity is designated as 'pretransfer' editing and involves the tRNA(Pro)-independent hydrolysis of activated Ala-AMP. The other activity is designated 'posttransfer' editing and involves deacylation of mischarged Ala-tRNA(Pro). The misacylated Cys-tRNA(Pro) is not edited by ProRS. The polypeptide is Proline--tRNA ligase (Helicobacter pylori (strain ATCC 700392 / 26695) (Campylobacter pylori)).